We begin with the raw amino-acid sequence, 68 residues long: uncharacterized protein (68 aa).

An N-terminal signal peptide occupies residues 1-28 (MNKEQSADDPSVDLIRVKNMLNSTISMS).

This is an uncharacterized protein from Escherichia coli (strain K12).